The sequence spans 1173 residues: Pleckstrin homology domain-containing family A member 6 (1173 aa).

The span at 1 to 22 shows a compositional bias: polar residues; that stretch reads MSNKTGGKRSATINSDIANHNM. Positions 1-39 are disordered; sequence MSNKTGGKRSATINSDIANHNMVSEVPPERPNIRATRTS. In terms of domain architecture, PH spans 59-158; it reads PVTKAGWLYK…WIQAMGEAAR (100 aa). Residues 163-346 are disordered; the sequence is PAQKSVPQPV…PSRFYPMPRR (184 aa). Positions 201–233 are enriched in basic and acidic residues; that stretch reads LEPEAKTRGEGDGRGCEKAERRPERPEVKKETL. Phosphoserine is present on residues S247 and S251. Polar residues-rich tracts occupy residues 270-281 and 311-322; these read NGWQYSSPSRPG and RKSSMNQLQQWV. S314, S459, S461, and S472 each carry phosphoserine. Y492 is modified (phosphotyrosine). The residue at position 665 (S665) is a Phosphoserine. 2 disordered regions span residues 737–872 and 888–984; these read RKNN…PRDI and ALNK…RPAY. Low complexity-rich tracts occupy residues 761–782 and 789–799; these read SSNS…SPFS and GSPTKPGSSEE. Residues 815-824 show a composition bias toward pro residues; it reads ESPPTVPPLP. The residue at position 864 (S864) is a Phosphoserine. The residue at position 868 (T868) is a Phosphothreonine. A Phosphoserine modification is found at S901. Residue T908 is modified to Phosphothreonine. The segment covering 915–926 has biased composition (polar residues); that stretch reads RTTNGLTNGLSS. Position 925 is a phosphoserine (S925). Positions 940–952 are enriched in basic and acidic residues; that stretch reads GKVKMSVEEQMDR. Residues 953–967 are compositionally biased toward basic residues; sequence MRRHQSGSMKEKRRS. Residues S973, S979, and S992 each carry the phosphoserine modification. A Phosphothreonine modification is found at T1045. At S1065 the chain carries Phosphoserine. Disordered stretches follow at residues 1093 to 1114 and 1130 to 1173; these read PIGE…QEQE and RGRM…TMRV. T1140 is subject to Phosphothreonine. Residues 1141 to 1155 show a composition bias toward pro residues; it reads PSPPTSPASPTPPVN. S1142 is modified (phosphoserine). At T1145 the chain carries Phosphothreonine. Phosphoserine is present on residues S1146 and S1149. At T1151 the chain carries Phosphothreonine.

The polypeptide is Pleckstrin homology domain-containing family A member 6 (Plekha6) (Mus musculus (Mouse)).